The following is a 576-amino-acid chain: MELENIVANTVLLKAREGGGGNRKGKSKKWRQMLQFPHISQCEELRLSLERDYHSLCERQPIGRLLFREFCATRPELTRCTAFLDGVSEYEVTPDEKRKACGRRLMQNFLSHTGPDLIPEVPRQLVSNCAQRLEQGPCKDLFQELTRLTHEYLSTAPFADYLDSIYFNRFLQWKWLERQPVTKNTFRQYRVLGKGGFGEVCACQVRATGKMYACKKLEKKRIKKRKGEAMALNEKQILEKVNSRFVVSLAYAYETKDALCLVLTLMNGGDLKFHIYHMGQAGFPEARAVFYAAEICCGLEDLHRERIVYRDLKPENILLDDHGHIRISDLGLAVHVPEGQTIKGRVGTVGYMAPEVVRNERYTFSPDWWALGCLLYEMIAGQSPFQQRKKKIKREEVERLVKEVAEEYTDRFSSQARSLCSQLLSKDPAERLGCRGGGAREVKEHPLFKKLNFKRLGAGMLEPPFKPDPQAIYCKDVLDIEQFSTVKGVDLEPTDQDFYQKFATGSVSIPWQNEMVETECFQELNVFGLDGSVPPDLDWKGQPTAPPKKGLLQRLFSRQDCCGNCSDSEEELPTRL.

An N-terminal region spans residues 1–185 (MELENIVANT…LERQPVTKNT (185 aa)). In terms of domain architecture, RGS spans 53–171 (YHSLCERQPI…LDSIYFNRFL (119 aa)). The Protein kinase domain maps to 186 to 448 (FRQYRVLGKG…AREVKEHPLF (263 aa)). Residues 192–200 (LGKGGFGEV), Lys215, and 264–270 (TLMNGGD) contribute to the ATP site. Residue Asp311 is the Proton acceptor of the active site. 315–318 (ENIL) provides a ligand contact to ATP. One can recognise an AGC-kinase C-terminal domain in the interval 449–514 (KKLNFKRLGA…GSVSIPWQNE (66 aa)). Position 484 is a phosphoserine (Ser484). Position 485 is a phosphothreonine (Thr485). S-palmitoyl cysteine attachment occurs at residues Cys561, Cys562, and Cys565. Phosphoserine is present on residues Ser566 and Ser568.

This sequence belongs to the protein kinase superfamily. AGC Ser/Thr protein kinase family. GPRK subfamily. In terms of assembly, interacts with GIT1. In terms of tissue distribution, expressed in the brain in striatal neurons.

The protein localises to the membrane. The enzyme catalyses [G-protein-coupled receptor] + ATP = [G-protein-coupled receptor]-phosphate + ADP + H(+). Functionally, specifically phosphorylates the activated forms of G protein-coupled receptors. Such receptor phosphorylation initiates beta-arrestin-mediated receptor desensitization, internalization, and signaling events leading to their desensitization. Seems to be involved in the desensitization of D2-like dopamine receptors in striatum and chemokine receptor CXCR4 which is critical for CXCL12-induced cell chemotaxis. Phosphorylates rhodopsin (RHO) (in vitro) and a non G-protein-coupled receptor, LRP6 during Wnt signaling (in vitro). The protein is G protein-coupled receptor kinase 6 (Grk6) of Mus musculus (Mouse).